We begin with the raw amino-acid sequence, 298 residues long: Inosose dehydratase 1 (298 aa).

The protein belongs to the IolE/MocC family. It depends on glutathione as a cofactor. Co(2+) serves as cofactor. The cofactor is Mn(2+).

It carries out the reaction scyllo-inosose = 3D-3,5/4-trihydroxycyclohexane-1,2-dione + H2O. Its pathway is polyol metabolism; myo-inositol degradation into acetyl-CoA; acetyl-CoA from myo-inositol: step 2/7. In terms of biological role, catalyzes the dehydration of inosose (2-keto-myo-inositol, 2KMI or 2,4,6/3,5-pentahydroxycyclohexanone) to 3D-(3,5/4)-trihydroxycyclohexane-1,2-dione (D-2,3-diketo-4-deoxy-epi-inositol). The sequence is that of Inosose dehydratase 1 from Bacillus cereus (strain ZK / E33L).